The sequence spans 545 residues: Mesoderm induction early response protein 2 (545 aa).

Position 11 is a phosphoserine (Ser-11). A disordered region spans residues 100 to 189 (DPISDRESEG…SSDTEEDSLP (90 aa)). Polar residues predominate over residues 140–153 (QSSADDLTPSVTSH). One can recognise an ELM2 domain in the interval 195–292 (KEIMVGPQFQ…EALRRLRFNV (98 aa)). The region spanning 297–349 (DGLCAWSEEECRNFEHGFRVHGKNFHLIQANKVRTRSVGECVEYYYLWKKSER) is the SANT domain. The segment at 364–464 (YVPSGTTDAD…YQPAVTAPEP (101 aa)) is disordered.

As to quaternary structure, part of a complex containing at least CDYL, MIER1, MIER2, HDAC1 and HDAC2.

It is found in the nucleus. Its function is as follows. Transcriptional repressor. The protein is Mesoderm induction early response protein 2 (MIER2) of Homo sapiens (Human).